We begin with the raw amino-acid sequence, 1096 residues long: MLRYTCHALFLGSLVLLSGCDNSSSSSTSGSPGSPGNPGNPGTPGTPDPQDVVVRLPDVAVPGEAVQASARQAVIHLVDIAGITSSTPADYATKNLYLWNNETCDALSAPVADWNDVSTTPTGSDKYGPYWVIPLTKESGSINVIVRDGTNKLIDSGRVSFSDFTDRTVSVIAGNSAVYDSRADAFRAAFGVALADAHWVDKTTLLWPGGENKPIVRLYYSHSSKVAADSNGEFSDKYVKLTPTTVNQQVSMRFPHLASYPAFKLPDDVNVDELLQGDDGGIAESDGILSLSHPGADRRRAGRYLCRRAEALSYGAQLTDSGVTFRVWAPTAQQVELVIYSADKKVIASHPMTRDSASGAWSWQGGSDLKGAFYRYAMTVYHPQSRKVEQYEVTDPYAHSLSTNSEYSQVVDLNDSALKPEGWDGLTMPHAQKTKADLAKMTIHESHIRDLSAWDQTVPAELRGKYLALTAQESNMVQHLKQLSASGVTHIELLPVFDLATVNEFSDKVADIQQPFSRLCEVNSAVKSSEFAGYCDSGSTVEEVLTQLKQNDSKDNPQVQALNTLVAQTDSYNWGYDPFHYTVPEGSYATDPEGTARIKEFRTMIQAIKQDLGMNVIMDVVYNHTNAAGPTDRTSVLDKIVPWYYQRLNETTGSVESATCCSDSAPEHRMFAKLIADSLAVWTTDYKIDGFRFDLMGYHPKAQILSAWERIKALNPDIYFFGEGWDSNQSDRFEIASQINLKGTGIGTFSDRLRDAVRGGGPFDSGDALRQNQGVGSGAGVLPNELTTLSDDQARHLADLTRLGMAGNLADFVLIDKDGAVKRGSEIDYNGAPGGYAADPTEVVNYVSKHDNQTLWDMISYKAAQEADLDTRVRMQAVSLATVMLGQGIAFDQQGSELLRSKSFTRDSYDSGDWFNRVDYSLQDNNYNVGMPRSSDDGSNYDIIARVKDAVATPGETELKQMTAFYQELTALRKSSPLFTLGDGATVMKRVDFRNTGADQQTGLLVMTIDDGMQAGRQSGQPCRRHRGGDQRRAGKPDAAGLRRHIAPAERYSAGGGRPVAGERVQVAADGSVTLPAWSVAVLELPQASRRALACR.

The signal sequence occupies residues 1 to 19 (MLRYTCHALFLGSLVLLSG). C20 carries N-palmitoyl cysteine lipidation. C20 carries S-diacylglycerol cysteine lipidation. The segment covering 24–34 (SSSSTSGSPGS) has biased composition (low complexity). Residues 24 to 50 (SSSSTSGSPGSPGNPGNPGTPGTPDPQ) are disordered. Residue D694 is the Nucleophile of the active site. E723 (proton donor) is an active-site residue. The segment at 1014-1044 (QAGRQSGQPCRRHRGGDQRRAGKPDAAGLRR) is disordered.

The protein belongs to the glycosyl hydrolase 13 family. Homotrimer.

The protein resides in the cell membrane. The enzyme catalyses Hydrolysis of (1-&gt;6)-alpha-D-glucosidic linkages in pullulan, amylopectin and glycogen, and in the alpha- and beta-limit dextrins of amylopectin and glycogen.. This chain is Pullulanase (pulA), found in Klebsiella aerogenes (Enterobacter aerogenes).